Reading from the N-terminus, the 804-residue chain is Probable basic-leucine zipper transcription factor C (804 aa).

Disordered regions lie at residues F86–N148 and Y275–R371. Residues N90–N145 show a composition bias toward low complexity. Residues Y275–A291 are compositionally biased toward polar residues. Over residues S292–N334 the composition is skewed to low complexity. Basic and acidic residues predominate over residues A335–E356. The bZIP domain occupies A415–K478. The basic motif stretch occupies residues R421 to K436. The leucine-zipper stretch occupies residues L443 to I450. The interval K670–G693 is disordered. Residues C672–N685 show a composition bias toward low complexity.

The protein belongs to the bZIP family.

Its subcellular location is the nucleus. In terms of biological role, probable transcriptional regulator. The sequence is that of Probable basic-leucine zipper transcription factor C (bzpC) from Dictyostelium discoideum (Social amoeba).